A 233-amino-acid polypeptide reads, in one-letter code: Sugar fermentation stimulation protein homolog (233 aa).

Belongs to the SfsA family.

The sequence is that of Sugar fermentation stimulation protein homolog from Teredinibacter turnerae (strain ATCC 39867 / T7901).